Here is a 151-residue protein sequence, read N- to C-terminus: 3-hydroxyacyl-[acyl-carrier-protein] dehydratase FabZ (151 aa).

Residue H49 is part of the active site.

This sequence belongs to the thioester dehydratase family. FabZ subfamily.

It localises to the cytoplasm. It carries out the reaction a (3R)-hydroxyacyl-[ACP] = a (2E)-enoyl-[ACP] + H2O. Functionally, involved in unsaturated fatty acids biosynthesis. Catalyzes the dehydration of short chain beta-hydroxyacyl-ACPs and long chain saturated and unsaturated beta-hydroxyacyl-ACPs. This Bordetella petrii (strain ATCC BAA-461 / DSM 12804 / CCUG 43448) protein is 3-hydroxyacyl-[acyl-carrier-protein] dehydratase FabZ.